We begin with the raw amino-acid sequence, 43 residues long: Protein PsbN (43 aa).

A helical membrane pass occupies residues 7 to 27 (VAIFISCLLVSFTGYALYTAF).

Belongs to the PsbN family.

The protein resides in the plastid. It localises to the chloroplast thylakoid membrane. In terms of biological role, may play a role in photosystem I and II biogenesis. The polypeptide is Protein PsbN (Zygnema circumcarinatum (Green alga)).